The primary structure comprises 325 residues: Elongation factor P--(R)-beta-lysine ligase (325 aa).

Residue 76–78 participates in substrate binding; the sequence is SPE. Residues 100-102 and asparagine 109 each bind ATP; that span reads RNE. Residue tyrosine 118 participates in substrate binding. 244 to 245 provides a ligand contact to ATP; it reads EL. Residue glutamate 251 participates in substrate binding. ATP is bound at residue glycine 300.

This sequence belongs to the class-II aminoacyl-tRNA synthetase family. EpmA subfamily. Homodimer.

It carries out the reaction D-beta-lysine + L-lysyl-[protein] + ATP = N(6)-((3R)-3,6-diaminohexanoyl)-L-lysyl-[protein] + AMP + diphosphate + H(+). Functionally, with EpmB is involved in the beta-lysylation step of the post-translational modification of translation elongation factor P (EF-P). Catalyzes the ATP-dependent activation of (R)-beta-lysine produced by EpmB, forming a lysyl-adenylate, from which the beta-lysyl moiety is then transferred to the epsilon-amino group of a conserved specific lysine residue in EF-P. The protein is Elongation factor P--(R)-beta-lysine ligase of Pectobacterium atrosepticum (strain SCRI 1043 / ATCC BAA-672) (Erwinia carotovora subsp. atroseptica).